The sequence spans 449 residues: Mannan endo-1,6-alpha-mannosidase DCW1 (449 aa).

A signal peptide spans 1–21; that stretch reads MLVNKVIGLLGVLFATRFTNA. N-linked (GlcNAc...) asparagine glycosylation is found at Asn34, Asn84, Asn109, Asn133, Asn203, Asn225, Asn240, Asn265, Asn281, Asn337, Asn362, and Asn420. A lipid anchor (GPI-anchor amidated glycine) is attached at Gly428. The propeptide at 429–449 is removed in mature form; it reads AGIITAVIGISIVACALWLVF.

This sequence belongs to the glycosyl hydrolase 76 family.

It is found in the cell membrane. It catalyses the reaction Random hydrolysis of (1-&gt;6)-alpha-D-mannosidic linkages in unbranched (1-&gt;6)-mannans.. Functionally, required for normal synthesis of the cell wall. This chain is Mannan endo-1,6-alpha-mannosidase DCW1 (DCW1), found in Saccharomyces cerevisiae (strain ATCC 204508 / S288c) (Baker's yeast).